Reading from the N-terminus, the 288-residue chain is Pyridoxal kinase PdxY (288 aa).

Residues Ser12 and 47 to 48 (TQ) each bind substrate. Residues Asp114, Glu151, Lys184, and 211 to 214 (RPLL) contribute to the ATP site. Position 225 (Asp225) interacts with substrate.

Belongs to the pyridoxine kinase family. PdxY subfamily. As to quaternary structure, homodimer. Requires Mg(2+) as cofactor.

The enzyme catalyses pyridoxal + ATP = pyridoxal 5'-phosphate + ADP + H(+). Its pathway is cofactor metabolism; pyridoxal 5'-phosphate salvage; pyridoxal 5'-phosphate from pyridoxal: step 1/1. Pyridoxal kinase involved in the salvage pathway of pyridoxal 5'-phosphate (PLP). Catalyzes the phosphorylation of pyridoxal to PLP. This is Pyridoxal kinase PdxY from Pseudomonas syringae pv. syringae (strain B728a).